Consider the following 143-residue polypeptide: Large ribosomal subunit protein uL15 (143 aa).

A disordered region spans residues 1-57; the sequence is MQLNNLKPAAGSKHAKRRVGRGIGSGLGKTAGRGHKGQKSRSGGFHKVGFEGGQMPL. Gly residues predominate over residues 21–31; sequence RGIGSGLGKTA.

It belongs to the universal ribosomal protein uL15 family. As to quaternary structure, part of the 50S ribosomal subunit.

Its function is as follows. Binds to the 23S rRNA. This Ralstonia pickettii (strain 12J) protein is Large ribosomal subunit protein uL15.